Consider the following 136-residue polypeptide: Histone H3 (136 aa).

The segment at 1–43 is disordered; it reads MARTKQTARKSTGGKAPRKQLASKAARKSAPSTGGVKKPHRYK. Lys-5 and Lys-10 each carry N6,N6,N6-trimethyllysine; alternate. Lys-5 is modified (N6,N6-dimethyllysine; alternate). An N6-methyllysine; alternate modification is found at Lys-5. Residue Lys-10 is modified to N6-acetyllysine; alternate. Residue Ser-11 is modified to Phosphoserine. Lys-15 carries the N6,N6-dimethyllysine; alternate modification. Residues Lys-15, Lys-19, Lys-24, Lys-28, and Lys-37 each carry the N6-methyllysine; alternate modification. N6-acetyllysine; alternate occurs at positions 15, 19, 24, 28, and 37. An N6,N6,N6-trimethyllysine; alternate mark is found at Lys-28 and Lys-37. Residues Lys-28 and Lys-37 each carry the N6,N6-dimethyllysine; alternate modification. Residues Lys-57 and Lys-65 each carry the N6-acetyllysine modification. Residue Lys-80 is modified to N6,N6,N6-trimethyllysine; alternate. Lys-80 is modified (N6,N6-dimethyllysine; alternate). At Lys-80 the chain carries N6-methyllysine; alternate.

It belongs to the histone H3 family. As to quaternary structure, the nucleosome is a histone octamer containing two molecules each of H2A, H2B, H3 and H4 assembled in one H3-H4 heterotetramer and two H2A-H2B heterodimers. The octamer wraps approximately 147 bp of DNA. In terms of processing, phosphorylated to form H3S10ph. H3S10ph promotes subsequent H3K14ac formation and is required for transcriptional activation through TBP recruitment to the promoters. Post-translationally, mono-, di- and trimethylated by the COMPASS complex to form H3K4me1/2/3. H3K4me activates gene expression by regulating transcription elongation and plays a role in telomere length maintenance. H3K4me enrichment correlates with transcription levels, and occurs in a 5' to 3' gradient with H3K4me3 enrichment at the 5'-end of genes, shifting to H3K4me2 and then H3K4me1. Trimethylated by methyltransferase dim-5 to form H3K9me3. H3K9me3, but not H3K9me2, marks chromatin regions for cytosine methylation. Methylated by set-2 to form H3K36me. H3K36me represses gene expression. Methylated by dot-1 to form H3K79me. H3K79me is required for association of SIR proteins with telomeric regions and for telomeric silencing. The COMPASS-mediated formation of H3K4me2/3 and the dot-1-mediated formation of H3K79me require H2BK123ub1. Acetylation of histone H3 leads to transcriptional activation. H3K14ac formation by gcn-5 is promoted by H3S10ph. H3K14ac can also be formed by esa-1. H3K56ac formation occurs predominantly in newly synthesized H3 molecules during G1, S and G2/M of the cell cycle and may be involved in DNA repair.

It is found in the nucleus. The protein localises to the chromosome. Functionally, core component of nucleosome. Nucleosomes wrap and compact DNA into chromatin, limiting DNA accessibility to the cellular machineries which require DNA as a template. Histones thereby play a central role in transcription regulation, DNA repair, DNA replication and chromosomal stability. DNA accessibility is regulated via a complex set of post-translational modifications of histones, also called histone code, and nucleosome remodeling. The protein is Histone H3 (hh3) of Neurospora crassa (strain ATCC 24698 / 74-OR23-1A / CBS 708.71 / DSM 1257 / FGSC 987).